A 181-amino-acid chain; its full sequence is MTQVTPAIIKNSITTIADYPKAGIMFRDVTTLMANPDAFKATIDAFIAAYKDQGFTKIIGTESRGFIFGAPLSYALGIPFIPVRKPGKLPREVVRQDYLLEYGEDTLELHVDAIVPGDKVLLVDDLLATGGTIEATIKLVQKLGGEATDAAFVVSLPELGGEKRIAKMGIKILKLVEFEGE.

Belongs to the purine/pyrimidine phosphoribosyltransferase family. In terms of assembly, homodimer.

It is found in the cytoplasm. The enzyme catalyses AMP + diphosphate = 5-phospho-alpha-D-ribose 1-diphosphate + adenine. Its pathway is purine metabolism; AMP biosynthesis via salvage pathway; AMP from adenine: step 1/1. Its function is as follows. Catalyzes a salvage reaction resulting in the formation of AMP, that is energically less costly than de novo synthesis. The sequence is that of Adenine phosphoribosyltransferase from Pseudoalteromonas translucida (strain TAC 125).